Reading from the N-terminus, the 330-residue chain is D-cysteine desulfhydrase (330 aa).

N6-(pyridoxal phosphate)lysine is present on K52.

This sequence belongs to the ACC deaminase/D-cysteine desulfhydrase family. Homodimer. Requires pyridoxal 5'-phosphate as cofactor.

The catalysed reaction is D-cysteine + H2O = hydrogen sulfide + pyruvate + NH4(+) + H(+). Its function is as follows. Catalyzes the alpha,beta-elimination reaction of D-cysteine and of several D-cysteine derivatives. It could be a defense mechanism against D-cysteine. This is D-cysteine desulfhydrase from Yersinia pestis.